A 479-amino-acid chain; its full sequence is D-aminoacyl-tRNA deacylase (479 aa).

Belongs to the DtdA deacylase family. As to quaternary structure, monomer. It depends on Zn(2+) as a cofactor.

The enzyme catalyses a D-aminoacyl-tRNA + H2O = a tRNA + a D-alpha-amino acid + H(+). It catalyses the reaction glycyl-tRNA(Ala) + H2O = tRNA(Ala) + glycine + H(+). Its function is as follows. D-aminoacyl-tRNA deacylase with broad substrate specificity. By recycling D-aminoacyl-tRNA to D-amino acids and free tRNA molecules, this enzyme counteracts the toxicity associated with the formation of D-aminoacyl-tRNA entities in vivo. This chain is D-aminoacyl-tRNA deacylase, found in Methanococcoides burtonii (strain DSM 6242 / NBRC 107633 / OCM 468 / ACE-M).